Consider the following 104-residue polypeptide: Putative pterin-4-alpha-carbinolamine dehydratase (104 aa).

This sequence belongs to the pterin-4-alpha-carbinolamine dehydratase family.

It catalyses the reaction (4aS,6R)-4a-hydroxy-L-erythro-5,6,7,8-tetrahydrobiopterin = (6R)-L-erythro-6,7-dihydrobiopterin + H2O. This is Putative pterin-4-alpha-carbinolamine dehydratase (pcbD) from Rhizobium meliloti (strain 1021) (Ensifer meliloti).